A 329-amino-acid polypeptide reads, in one-letter code: 4-hydroxythreonine-4-phosphate dehydrogenase (329 aa).

H136 and T137 together coordinate substrate. A divalent metal cation is bound by residues H166, H211, and H266. K274, N283, and R292 together coordinate substrate.

Belongs to the PdxA family. Homodimer. Zn(2+) is required as a cofactor. Mg(2+) serves as cofactor. The cofactor is Co(2+).

It is found in the cytoplasm. It carries out the reaction 4-(phosphooxy)-L-threonine + NAD(+) = 3-amino-2-oxopropyl phosphate + CO2 + NADH. It participates in cofactor biosynthesis; pyridoxine 5'-phosphate biosynthesis; pyridoxine 5'-phosphate from D-erythrose 4-phosphate: step 4/5. In terms of biological role, catalyzes the NAD(P)-dependent oxidation of 4-(phosphooxy)-L-threonine (HTP) into 2-amino-3-oxo-4-(phosphooxy)butyric acid which spontaneously decarboxylates to form 3-amino-2-oxopropyl phosphate (AHAP). This Shigella boydii serotype 4 (strain Sb227) protein is 4-hydroxythreonine-4-phosphate dehydrogenase.